Consider the following 177-residue polypeptide: Ribulose bisphosphate carboxylase small subunit, chloroplastic 4 (177 aa).

The transit peptide at 1-56 (MASSMMASTAAAVARAGPAQTNMVPFNACRSSVPFPATRKANNDLSTLPSNGGRVS) directs the protein to the chloroplast.

The protein belongs to the RuBisCO small chain family. Heterohexadecamer of 8 large and 8 small subunits.

It localises to the plastid. Its subcellular location is the chloroplast. Functionally, ruBisCO catalyzes two reactions: the carboxylation of D-ribulose 1,5-bisphosphate, the primary event in carbon dioxide fixation, as well as the oxidative fragmentation of the pentose substrate. Both reactions occur simultaneously and in competition at the same active site. Although the small subunit is not catalytic it is essential for maximal activity. This chain is Ribulose bisphosphate carboxylase small subunit, chloroplastic 4, found in Lemna gibba (Swollen duckweed).